A 349-amino-acid chain; its full sequence is Nuclear distribution protein nudE homolog 1-A (349 aa).

A coiled-coil region spans residues 22–189; sequence VAMKYKQCSE…ELAVQQKQEK (168 aa).

It belongs to the nudE family. Self-associates. Interacts with pafah1b1. Phosphorylated in mitosis.

It localises to the cytoplasm. The protein resides in the cytoskeleton. Its subcellular location is the microtubule organizing center. The protein localises to the centrosome. It is found in the spindle. It localises to the chromosome. The protein resides in the centromere. Its subcellular location is the kinetochore. The protein localises to the cleavage furrow. It is found in the cytoplasmic vesicle membrane. Its function is as follows. Required for centrosome duplication and formation and function of the mitotic spindle. This chain is Nuclear distribution protein nudE homolog 1-A (nde1-a), found in Xenopus laevis (African clawed frog).